The sequence spans 154 residues: Leghemoglobin-2 (154 aa).

The 149-residue stretch at 3–151 (ALTESQAALV…LAIVIKKEMN (149 aa)) folds into the Globin domain. Ser46 is a binding site for heme b. Ser46 is subject to Phosphoserine. Residue His64 participates in O2 binding. Positions 67, 98, and 101 each coordinate heme b. The residue at position 139 (Tyr139) is a Nitrated tyrosine.

Belongs to the plant globin family. Monomer. In terms of processing, nitrated in effective nodules and particularly in hypoxic conditions; this mechanism may play a protective role in the symbiosis by buffering toxic peroxynitrite NO(2)(-). Nitration level decrease during nodule senescence. Phosphorylation at Ser-46 disrupts the molecular environment of its porphyrin ring oxygen binding pocket, thus leading to a reduced oxygen consumption and to the delivery of oxygen O(2) to symbiosomes. Root nodules.

The protein resides in the cytoplasm. It localises to the cytosol. It is found in the nucleus. Leghemoglobin that reversibly binds oxygen O(2) through a pentacoordinated heme iron. In root nodules, facilitates the diffusion of oxygen to the bacteroids while preventing the bacterial nitrogenase from being inactivated by buffering dioxygen, nitric oxide and carbon monoxide, and promoting the formation of reactive oxygen species (ROS, e.g. H(2)O(2)). This role is essential for symbiotic nitrogen fixation (SNF). The protein is Leghemoglobin-2 of Lupinus luteus (European yellow lupine).